The primary structure comprises 160 residues: Protein-export protein SecB (160 aa).

Belongs to the SecB family. Homotetramer, a dimer of dimers. One homotetramer interacts with 1 SecA dimer.

Its subcellular location is the cytoplasm. Its function is as follows. One of the proteins required for the normal export of preproteins out of the cell cytoplasm. It is a molecular chaperone that binds to a subset of precursor proteins, maintaining them in a translocation-competent state. It also specifically binds to its receptor SecA. This is Protein-export protein SecB from Orientia tsutsugamushi (strain Boryong) (Rickettsia tsutsugamushi).